A 575-amino-acid chain; its full sequence is Golgi-associated kinase 1A (575 aa).

Positions 1–29 (MASWLRRKLRGKRRPVIAFCLLMILSAMA) are cleaved as a signal peptide. A propeptide spans 30 to 119 (VTRFPPQRPS…GDLRHPGRVR (90 aa)) (removed in mature form). The segment at 53 to 58 (TGAPAT) is O-glycosylated at one site. Residues 143–153 (VGDPGTKDLGH) are compositionally biased toward basic and acidic residues. The tract at residues 143–162 (VGDPGTKDLGHPQHGSPIQE) is disordered. Positions 437–575 (RYCCGFEPEP…NLTLFRDEDP (139 aa)) are cleaved as a propeptide — removed in mature form. N566 is a glycosylation site (N-linked (GlcNAc...) asparagine).

It belongs to the GASK family. In terms of processing, O-glycosylated with core 1 or possibly core 8 glycans. Post-translationally, proteolytically cleaved. Cleaved at Arg-120 and Arg-437 leading to a processed mature product of 35 kDa. The cleavage takes place in the Golgi apparatus. As to expression, expressed in skin, lung and colon (at protein level).

It is found in the secreted. Its subcellular location is the endoplasmic reticulum. The protein localises to the golgi apparatus. It localises to the membrane. The protein resides in the caveola. The sequence is that of Golgi-associated kinase 1A from Homo sapiens (Human).